Consider the following 484-residue polypeptide: Falcipain-2a (484 aa).

Topologically, residues 1–35 are cytoplasmic; that stretch reads MDYNMDYAPHEVISQQGERFVDKYVDRKILKNKKS. The propeptide at 1–243 is activation peptide; it reads MDYNMDYAPH…PLKNSKYLLD (243 aa). Positions 16–25 match the Bipartite vacuolar targeting signal 1 motif; it reads QGERFVDKYV. Residues 36-56 traverse the membrane as a helical; Signal-anchor for type II membrane protein segment; the sequence is LLVIISLSVLSVVGFVLFYFT. At 57–484 the chain is on the lumenal side; sequence PNSRKSDLFK…GTDAFIPLIE (428 aa). Asparagine 67 carries N-linked (GlcNAc...) asparagine glycosylation. Positions 84 to 105 match the Bipartite vacuolar targeting signal 2 motif; that stretch reads KSPNGKKFIVSKIDEALSFYDS. The Nose motif; required for the correct folding of the mature form signature appears at 244 to 260; the sequence is QMNYEEVIKKYKGNENF. Disulfide bonds link cysteine 282–cysteine 323, cysteine 316–cysteine 357, cysteine 342–cysteine 362, and cysteine 411–cysteine 472. Residue cysteine 285 is part of the active site. The active site involves histidine 417. The short motif at 428 to 437 is the Arm motif; binds to host hemoglobin and required for the inhibitory interaction between the propeptide and the catalytic domain element; the sequence is EIVNPLTKKG. Residue asparagine 447 is part of the active site.

This sequence belongs to the peptidase C1 family. As to quaternary structure, component of the hemozoin formation complex (HFC) composed of falcipains FP2A and/or FP2B, plasmepsins PMII, PMIII/HAP and PMIV, heme detoxifying protein HDP and falcilysin FLN. The HFC complex is involved in hemoglobin degradation and detoxification of heme in the food vacuole during the asexual blood stage. Post-translationally, auto-cleaved to remove the propeptide.

It localises to the vacuole. It is found in the membrane. With respect to regulation, inhibited by cysteine protease inhibitor ICP. Inhibited by heme and heme analogs. Functionally, cysteine protease which cleaves native host hemoglobin and globin in the food vacuole during the asexual blood stage. The binding to host hemoglobin is pH-sensitive and only occurs at acidic pH. Cleaves ankyrin and protein 4.1, two components of host erythrocyte membrane cytoskeleton required for the stability of the erythrocyte membrane, and thus may be involved in parasite release. Preferentially cleaves substrates which have an arginine or lysine at the P1 position and a leucine or phenylalanine at the P2 position. In Plasmodium falciparum (isolate 3D7), this protein is Falcipain-2a.